The chain runs to 448 residues: Probable glycine dehydrogenase (decarboxylating) subunit 1 (448 aa).

The protein belongs to the GcvP family. N-terminal subunit subfamily. The glycine cleavage system is composed of four proteins: P, T, L and H. In this organism, the P 'protein' is a heterodimer of two subunits.

The enzyme catalyses N(6)-[(R)-lipoyl]-L-lysyl-[glycine-cleavage complex H protein] + glycine + H(+) = N(6)-[(R)-S(8)-aminomethyldihydrolipoyl]-L-lysyl-[glycine-cleavage complex H protein] + CO2. In terms of biological role, the glycine cleavage system catalyzes the degradation of glycine. The P protein binds the alpha-amino group of glycine through its pyridoxal phosphate cofactor; CO(2) is released and the remaining methylamine moiety is then transferred to the lipoamide cofactor of the H protein. In Anoxybacillus flavithermus (strain DSM 21510 / WK1), this protein is Probable glycine dehydrogenase (decarboxylating) subunit 1.